The following is a 238-amino-acid chain: Ribonuclease PH (238 aa).

Phosphate-binding positions include R86 and 124-126 (GTR).

It belongs to the RNase PH family. In terms of assembly, homohexameric ring arranged as a trimer of dimers.

It catalyses the reaction tRNA(n+1) + phosphate = tRNA(n) + a ribonucleoside 5'-diphosphate. Its function is as follows. Phosphorolytic 3'-5' exoribonuclease that plays an important role in tRNA 3'-end maturation. Removes nucleotide residues following the 3'-CCA terminus of tRNAs; can also add nucleotides to the ends of RNA molecules by using nucleoside diphosphates as substrates, but this may not be physiologically important. Probably plays a role in initiation of 16S rRNA degradation (leading to ribosome degradation) during starvation. In Brucella melitensis biotype 2 (strain ATCC 23457), this protein is Ribonuclease PH.